A 124-amino-acid polypeptide reads, in one-letter code: Trophoblast-specific protein alpha (124 aa).

Positions 1-18 (MTPTIFLVILCLGVASAV) are cleaved as a signal peptide. Disordered regions lie at residues 51-74 (KLHS…SGQL) and 91-124 (FEEE…NQPQ). Positions 62–74 (EGSNIEMSASGQL) are enriched in polar residues. The segment covering 103–112 (DDPEFEDYTE) has biased composition (acidic residues).

It localises to the secreted. The protein localises to the extracellular space. It may be a growth factor/hormone, perhaps involved in interaction between the maternal and fetal systems in maintenance of pregnancy. The chain is Trophoblast-specific protein alpha (Tpbpa) from Mus musculus (Mouse).